A 500-amino-acid chain; its full sequence is L-arabinose isomerase (500 aa).

The Mn(2+) site is built by Glu306, Glu333, His350, and His450.

It belongs to the arabinose isomerase family. As to quaternary structure, homohexamer. Mn(2+) is required as a cofactor.

The catalysed reaction is beta-L-arabinopyranose = L-ribulose. The protein operates within carbohydrate degradation; L-arabinose degradation via L-ribulose; D-xylulose 5-phosphate from L-arabinose (bacterial route): step 1/3. Functionally, catalyzes the conversion of L-arabinose to L-ribulose. In Salmonella typhi, this protein is L-arabinose isomerase.